The following is a 536-amino-acid chain: Putative cysteine ligase BshC (536 aa).

The protein belongs to the BshC family.

Functionally, involved in bacillithiol (BSH) biosynthesis. May catalyze the last step of the pathway, the addition of cysteine to glucosamine malate (GlcN-Mal) to generate BSH. This is Putative cysteine ligase BshC from Anoxybacillus flavithermus (strain DSM 21510 / WK1).